A 148-amino-acid polypeptide reads, in one-letter code: Deoxyuridine 5'-triphosphate nucleotidohydrolase (148 aa).

Residues 68–70 (RSG), Asn81, 85–87 (TID), and Lys95 each bind substrate.

This sequence belongs to the dUTPase family. The cofactor is Mg(2+).

The catalysed reaction is dUTP + H2O = dUMP + diphosphate + H(+). It functions in the pathway pyrimidine metabolism; dUMP biosynthesis; dUMP from dCTP (dUTP route): step 2/2. In terms of biological role, this enzyme is involved in nucleotide metabolism: it produces dUMP, the immediate precursor of thymidine nucleotides and it decreases the intracellular concentration of dUTP so that uracil cannot be incorporated into DNA. This chain is Deoxyuridine 5'-triphosphate nucleotidohydrolase, found in Thermoanaerobacter sp. (strain X514).